We begin with the raw amino-acid sequence, 498 residues long: POU domain protein 2, isoform A (498 aa).

Residues 1-30 are compositionally biased toward low complexity; the sequence is MMVLQQQQQQRLWDATTTSNTNTQTQQSAN. The tract at residues 1–35 is disordered; sequence MMVLQQQQQQRLWDATTTSNTNTQTQQSANVESTP. Phosphoserine is present on residues S72, S211, S215, S217, and S219. Positions 191–273 are disordered; sequence QMKQQQREDP…STPKPTSGLT (83 aa). Over residues 207 to 222 the composition is skewed to low complexity; that stretch reads PLAKSPLRSPSLSPVP. Residues 228–251 are compositionally biased toward polar residues; that stretch reads QQRTPPNSMTANSLGMSSAVMTPN. Positions 252–270 are enriched in low complexity; the sequence is TPSMQQQPQLQQSTPKPTS. Positions 286 to 360 constitute a POU-specific domain; sequence EETTDLEELE…LLQKWLEDAD (75 aa). The segment at residues 391-450 is a DNA-binding region (homeobox); the sequence is RRKKRTSIETTVRTTLEKAFLMNCKPTSEEISQLSERLNMDKEVIRVWFCNRRQKEKRIN.

This sequence belongs to the POU transcription factor family. Class-2 subfamily. As to expression, initial expression in cellular blastoderm stage, then in ectodermal stripes during germband extension. Broad expression in the neuroectoderm followed by limitation to discrete subsets of CNS cells, and expression in specific PNS neurons and support cells.

Its subcellular location is the nucleus. Functionally, DNA-binding regulatory protein implicated in early development. Involved in neuronal cell fate decision. May act as an octamer-dependent activator of transcription. Could also play an early role in specific ectodermal cells, and a subsequent role in the embryonic nervous system. This chain is POU domain protein 2, isoform A (pdm2), found in Drosophila melanogaster (Fruit fly).